We begin with the raw amino-acid sequence, 637 residues long: Proton myo-inositol cotransporter (637 aa).

The Cytoplasmic portion of the chain corresponds to 1 to 65 (MSRKASEDVE…AARRQFQRDE (65 aa)). Ser-6 carries the post-translational modification Phosphoserine. Positions 16–38 (LSSLMGERRRRQPEPGAPGGERS) are disordered. 2 positions are modified to phosphoserine: Ser-44 and Ser-47. Residues 66-86 (TPAFVYAAAAFSALGGFLFGY) form a helical membrane-spanning segment. Residues 87 to 114 (DTGVVSGAMLLLRRQMRLGAMWQELLVS) are Extracellular-facing. The helical transmembrane segment at 115–135 (GAVGAAAVAALAGGALNGALG) threads the bilayer. The Cytoplasmic portion of the chain corresponds to 136–137 (RR). Residues 138-158 (SAILLASALCTVGSAVLAAAA) form a helical membrane-spanning segment. Over 159–167 (NKETLLAGR) the chain is Extracellular. A helical transmembrane segment spans residues 168-188 (LVVGLGIGIASMTVPVYIAEV). The Cytoplasmic portion of the chain corresponds to 189 to 201 (SPPNLRGRLVTIN). Residues 202–222 (TLFITGGQFFASVVDGAFSYL) traverse the membrane as a helical segment. Topologically, residues 223–228 (QKDGWR) are extracellular. A helical transmembrane segment spans residues 229-249 (YMLGLAAIPAVIQFLGFLFLP). At 250-313 (ESPRWLIQKG…RMLSYPPTRR (64 aa)) the chain is on the cytoplasmic side. The helical transmembrane segment at 314–334 (ALAVGCGLQMFQQLSGINTIM) threads the bilayer. At 335–352 (YYSATILQMSGVEDDRLA) the chain is on the extracellular side. Residues 353 to 373 (IWLASITAFTNFIFTLVGVWL) traverse the membrane as a helical segment. The Cytoplasmic portion of the chain corresponds to 374-382 (VEKVGRRKL). The chain crosses the membrane as a helical span at residues 383 to 403 (TFGSLAGTTVALTILALGFLL). Residues 404–497 (SAQVSPRVTF…SFCPTPYSWT (94 aa)) lie on the Extracellular side of the membrane. Asn-422, Asn-447, and Asn-474 each carry an N-linked (GlcNAc...) asparagine glycan. The helical transmembrane segment at 498–518 (ALVGLVLYLVFFAPGMGPMPW) threads the bilayer. The Cytoplasmic portion of the chain corresponds to 519–538 (TVNSEIYPLWARSTGNACSA). The helical transmembrane segment at 539–559 (GINWIFNVLVSLTFLHTAEYL) threads the bilayer. At 560-562 (TYY) the chain is on the extracellular side. The chain crosses the membrane as a helical span at residues 563–583 (GAFFLYAGFAAVGLLFVYGCL). Residues 584–637 (PETKGKKLEEIESLFDHRLCTCGTADSDEGRYIEYIRVKGSNYHLSDNDASDVE) are Cytoplasmic-facing. Ser-629 and Ser-634 each carry phosphoserine.

This sequence belongs to the major facilitator superfamily. Sugar transporter (TC 2.A.1.1) family.

It localises to the cell membrane. The catalysed reaction is myo-inositol(out) + H(+)(out) = myo-inositol(in) + H(+)(in). Functionally, h(+)-myo-inositol cotransporter. Can also transport related stereoisomers. This is Proton myo-inositol cotransporter from Rattus norvegicus (Rat).